A 25-amino-acid chain; its full sequence is Chlorocatechol 1,2-dioxygenase 1 (25 aa).

This sequence belongs to the intradiol ring-cleavage dioxygenase family. Fe(3+) is required as a cofactor.

It catalyses the reaction 3,5-dichlorocatechol + O2 = (2E,4E)-2,4-dichloromuconate + 2 H(+). The protein operates within xenobiotic degradation; 2-(2,4-dichlorophenoxy)propanoate degradation. The sequence is that of Chlorocatechol 1,2-dioxygenase 1 (tfdC) from Delftia acidovorans (Pseudomonas acidovorans).